We begin with the raw amino-acid sequence, 74 residues long: Small ribosomal subunit protein bS20c (74 aa).

It belongs to the bacterial ribosomal protein bS20 family.

The protein resides in the plastid. Its subcellular location is the chloroplast. Binds directly to 16S ribosomal RNA. This is Small ribosomal subunit protein bS20c from Cyanidioschyzon merolae (strain NIES-3377 / 10D) (Unicellular red alga).